The chain runs to 116 residues: MSQQKQQLTENQIIEHYKDLKSQQQQIISRISEFESDVGEYGLVINAIQNLESNRKCFRMVGGVLVERTVGEVLPQIKQNRDGIKEVVKKLDENLSIKTKELNDFVALYKIKITSQ.

The protein belongs to the prefoldin subunit beta family. Heterohexamer of two PFD-alpha type and four PFD-beta type subunits.

In terms of biological role, binds specifically to cytosolic chaperonin (c-CPN) and transfers target proteins to it. Binds to nascent polypeptide chain and promotes folding in an environment in which there are many competing pathways for nonnative proteins. The sequence is that of Probable prefoldin subunit 2 (pfdn2) from Dictyostelium discoideum (Social amoeba).